A 325-amino-acid polypeptide reads, in one-letter code: Biotin synthase (325 aa).

A Radical SAM core domain is found at 49–267 (TQVQISTLLS…IAAARISMPR (219 aa)). The [4Fe-4S] cluster site is built by C64, C68, and C71. 4 residues coordinate [2Fe-2S] cluster: C108, C139, C199, and R271.

Belongs to the radical SAM superfamily. Biotin synthase family. Homodimer. [4Fe-4S] cluster is required as a cofactor. Requires [2Fe-2S] cluster as cofactor.

It catalyses the reaction (4R,5S)-dethiobiotin + (sulfur carrier)-SH + 2 reduced [2Fe-2S]-[ferredoxin] + 2 S-adenosyl-L-methionine = (sulfur carrier)-H + biotin + 2 5'-deoxyadenosine + 2 L-methionine + 2 oxidized [2Fe-2S]-[ferredoxin]. It functions in the pathway cofactor biosynthesis; biotin biosynthesis; biotin from 7,8-diaminononanoate: step 2/2. In terms of biological role, catalyzes the conversion of dethiobiotin (DTB) to biotin by the insertion of a sulfur atom into dethiobiotin via a radical-based mechanism. This is Biotin synthase from Acidiphilium cryptum (strain JF-5).